A 211-amino-acid chain; its full sequence is FMN-dependent NADH:quinone oxidoreductase 2 (211 aa).

FMN-binding positions include serine 10 and 17–19; that span reads SRS.

The protein belongs to the azoreductase type 1 family. In terms of assembly, homodimer. The cofactor is FMN.

The enzyme catalyses 2 a quinone + NADH + H(+) = 2 a 1,4-benzosemiquinone + NAD(+). It carries out the reaction N,N-dimethyl-1,4-phenylenediamine + anthranilate + 2 NAD(+) = 2-(4-dimethylaminophenyl)diazenylbenzoate + 2 NADH + 2 H(+). Functionally, quinone reductase that provides resistance to thiol-specific stress caused by electrophilic quinones. Its function is as follows. Also exhibits azoreductase activity. Catalyzes the reductive cleavage of the azo bond in aromatic azo compounds to the corresponding amines. The protein is FMN-dependent NADH:quinone oxidoreductase 2 of Listeria monocytogenes serotype 4b (strain F2365).